The following is a 581-amino-acid chain: Laccase-2 (581 aa).

The N-terminal stretch at 1 to 19 (MKYSTVFTALTALFAQASA) is a signal peptide. 2 consecutive Plastocyanin-like domains span residues 74-191 (SVEN…GPAT) and 197-353 (DVGA…YDSS). N-linked (GlcNAc...) asparagine glycosylation is found at Asn77, Asn93, and Asn120. His125, His127, His169, and His171 together coordinate Cu cation. Cys146 and Cys562 are joined by a disulfide. Asn232, Asn283, Asn343, Asn408, Asn427, and Asn441 each carry an N-linked (GlcNAc...) asparagine glycan. In terms of domain architecture, Plastocyanin-like 3 spans 413 to 547 (LLDWSSPTTL…AMQFVESQSS (135 aa)). The Cu cation site is built by His464, His467, His469, His526, Cys527, His528, and His532.

Belongs to the multicopper oxidase family. Cu cation serves as cofactor.

Its subcellular location is the secreted. It carries out the reaction 4 hydroquinone + O2 = 4 benzosemiquinone + 2 H2O. Functionally, lignin degradation and detoxification of lignin-derived products. This Botryotinia fuckeliana (Noble rot fungus) protein is Laccase-2 (lcc2).